We begin with the raw amino-acid sequence, 431 residues long: MFVDQVKVDVKAGNGGNGMVAFRREKFVPNGGPAGGDGGRGGSVVLQADEGLRTLMDFRYTRKFKAAAGGNGMIKQMTGRSAKDTIIKVPLGTTVTDAETGELIGDIVNKDQRLVVAKGGRGGRGNIHFASAKNPAPEIAENGEPGDELTIRMELKVLADVGLVGFPSVGKSTLLSVVTSAKPKIAAYHFTTLVPNLGMVRLDDGRDFVMADLPGLIEGAANGVGLGIQFLRHIERTRVILHLIDMSGVEENDPFEDYHKINHELTSYDPDLLKRPQIVVATKMDMPDAEANLEDFKAKLATDDTLPNTPAVYPVSSITQQGLKALLAKTADLLDTTPQFPIKGVDDLKHRDYTTEADADFSIDNPEPGLFVLSGDKLERLFKMTNLDHEESLMRFARQLRGMGVDDALRAAGAKNDDTIQILDYSFQFMD.

An Obg domain is found at 1–158 (MFVDQVKVDV…LTIRMELKVL (158 aa)). The 177-residue stretch at 159–335 (ADVGLVGFPS…LLAKTADLLD (177 aa)) folds into the OBG-type G domain. Residues 165 to 172 (GFPSVGKS), 190 to 194 (FTTLV), 212 to 215 (DLPG), 282 to 285 (TKMD), and 316 to 318 (SSI) each bind GTP. Mg(2+)-binding residues include serine 172 and threonine 192. Residues 353 to 431 (YTTEADADFS…ILDYSFQFMD (79 aa)) form the OCT domain.

Belongs to the TRAFAC class OBG-HflX-like GTPase superfamily. OBG GTPase family. Monomer. Mg(2+) is required as a cofactor.

The protein resides in the cytoplasm. Functionally, an essential GTPase which binds GTP, GDP and possibly (p)ppGpp with moderate affinity, with high nucleotide exchange rates and a fairly low GTP hydrolysis rate. Plays a role in control of the cell cycle, stress response, ribosome biogenesis and in those bacteria that undergo differentiation, in morphogenesis control. This chain is GTPase Obg, found in Lactiplantibacillus plantarum (strain ATCC BAA-793 / NCIMB 8826 / WCFS1) (Lactobacillus plantarum).